A 397-amino-acid chain; its full sequence is Translocase of chloroplast 34 homolog, chloroplastic (397 aa).

Residues 1 to 72 are disordered; it reads MAQPPRPAEE…SQPWAGLNRL (72 aa). Composition is skewed to acidic residues over residues 10–32 and 44–63; these read EYDD…DDES and AGDE…DEDS. The region spanning 90-321 is the AIG1-type G domain; it reads RKQLTVLLLG…YKYHPRLSSK (232 aa). Positions 99–106 are G1; sequence GKSSVGKS. GTP is bound by residues 102-107 and 121-126; these read SVGKSS and QAFKLQ. Ser-106 serves as a coordination point for Mg(2+). Residues 121–124 are homodimerization; that stretch reads QAFK. The interval 126 to 130 is G2; it reads QADTD. A G3 region spans residues 155–158; that stretch reads DTCG. The interval 193–198 is homodimerization; sequence RLDLYR. The segment at 227-230 is G4; the sequence is THAN. GTP is bound by residues His-228 and 271 to 272; that span reads EN. The interval 271–273 is G5; the sequence is ENS. Residues 329–349 traverse the membrane as a helical segment; it reads LLPVAIAAEVLFYRRFLHPRL. The AKR2A-binding sequence (ABS) required for chloroplast outer envelope membrane targeting motif lies at 350–358; that stretch reads DDNQRRVER.

This sequence belongs to the TRAFAC class TrmE-Era-EngA-EngB-Septin-like GTPase superfamily. AIG1/Toc34/Toc159-like paraseptin GTPase family. TOC34 subfamily. In terms of assembly, homodimer, heterodimer with other TOC proteins, and monomer. Part of the TOC core complex that includes 1 protein for the specific recognition of transit peptides surrounded by a ring composed of four proteins forming translocation channels, and four to five GTP-binding proteins providing energy. This core complex can interact with components of the TIC complex to form a larger import complex. Interacts with ARSA1. The cofactor is Mg(2+).

It localises to the plastid. Its subcellular location is the chloroplast outer membrane. In terms of biological role, GTPase involved in protein precursor import into chloroplasts. Seems to recognize chloroplast-destined precursor proteins and regulate their presentation to the translocation channel through GTP hydrolysis. Functions as an essential component of the outer chloroplast membrane translocon (TOC) complex, which, in turn, catalyzes the import of nucleus-encoded precursor polypeptides from the cytoplasm to the chloroplast. In Chlamydomonas reinhardtii (Chlamydomonas smithii), this protein is Translocase of chloroplast 34 homolog, chloroplastic.